The chain runs to 650 residues: Amyloid beta precursor like protein 1 (650 aa).

An N-terminal signal peptide occupies residues 1–38 (MGPASPAARGLSRRPGQPPLPLLLPLLLLLLRAQPAIG). The Extracellular portion of the chain corresponds to 39-580 (SLAGGSPGAA…APAGTGVSRE (542 aa)). The segment at 50 to 146 (APGSAQVAGL…PFRCLPGEFV (97 aa)) is GFLD subdomain. One can recognise an E1 domain in the interval 50-212 (APGSAQVAGL…RGVEYVCCPP (163 aa)). Intrachain disulfides connect Cys-60–Cys-84, Cys-95–Cys-140, Cys-120–Cys-128, Cys-156–Cys-210, Cys-167–Cys-197, and Cys-181–Cys-209. The segment at 154–212 (EGCRFLHQERMDQCESSTRRHQEAQEACSSQGLILHGSGMLLPCGSDRFRGVEYVCCPP) is cuBD subdomain. Residue His-174 participates in Cu(2+) binding. Glu-206, Cys-209, and Cys-210 together coordinate Zn(2+). The disordered stretch occupies residues 214-287 (GTPDPSGTAV…LAVVGKVTPT (74 aa)). Thr-215 is a glycosylation site (O-linked (GalNAc...) threonine). Residue Ser-227 is glycosylated (O-linked (GalNAc...) serine). Thr-228 is a glycosylation site (O-linked (GalNAc...) threonine). Positions 285 to 305 (TPTPRPTDGVDIYFGMPGEIS) are O-glycosylated at three sites. In terms of domain architecture, E2 spans 293–484 (GVDIYFGMPG…QELRPQIQEL (192 aa)). Heparin-binding regions lie at residues 310 to 342 (FLRA…SKNL) and 410 to 441 (LLAL…DPEK). Asn-337 is a glycosylation site (N-linked (GlcNAc...) asparagine). The interval 442 to 459 (AQQMRFQVHTHLQVIEER) is collagen-binding. An N-linked (GlcNAc...) asparagine glycan is attached at Asn-461. Residues 492–546 (PSELEAPAPGGSSEDKGGLQPPDSKDDTPMTLPKGSTEQDAASPEKEKMNPLEQY) form a disordered region. Basic and acidic residues-rich tracts occupy residues 504–519 (SEDK…KDDT) and 534–546 (SPEK…LEQY). Asn-551 is a glycosylation site (N-linked (GlcNAc...) asparagine). A Cu(2+)-binding site is contributed by His-561. Residue His-561 coordinates Zn(2+). The helical transmembrane segment at 581–603 (AVSGLLIMGAGGGSLIVLSMLLL) threads the bilayer. The Basolateral sorting signal signature appears at 604–615 (RRKKPYGAISHG). Topologically, residues 604-650 (RRKKPYGAISHGVVEVDPMLTLEEQQLRELQRHGYENPTYRFLEERP) are cytoplasmic. Positions 632–649 (ELQRHGYENPTYRFLEER) are interaction with DAB1. The segment at 636–650 (HGYENPTYRFLEERP) is interaction with DAB2. The short motif at 640–643 (NPTY) is the Clathrin-binding element. The NPXY motif; contains endocytosis signal signature appears at 640 to 643 (NPTY).

Belongs to the APP family. In terms of assembly, monomer and homodimer. Heparin binding promotes homodimerization. Binds, via its C-terminus, to the PID domain of several cytoplasmic proteins, including APBB and APBA family members, MAPK8IP1 and DAB1. Binding to Dab1 inhibits its serine phosphorylation. Interacts with CPEB1. Interacts (via NPXY motif) with DAB2 (via PID domain); the interaction is impaired by tyrosine phosphorylation of the NPXY motif. Interacts (via NPXY motif) with DAB1. Proteolytically cleaved by caspases during neuronal apoptosis. Cleaved, in vitro, at Asp-620 by caspase-3. In terms of processing, N- and O-glycosylated. O-glycosylation with core 1 or possibly core 8 glycans. Glycosylation on Ser-227 is the preferred site to Thr-228. Expressed in the cerebral cortex where it is localized to the postsynaptic density (PSD).

The protein localises to the cell membrane. The protein resides in the cytoplasm. May play a role in postsynaptic function. The C-terminal gamma-secretase processed fragment, ALID1, activates transcription activation through APBB1 (Fe65) binding. Couples to JIP signal transduction through C-terminal binding. May interact with cellular G-protein signaling pathways. Can regulate neurite outgrowth through binding to components of the extracellular matrix such as heparin and collagen I. In terms of biological role, the gamma-CTF peptide, C30, is a potent enhancer of neuronal apoptosis. The protein is Amyloid beta precursor like protein 1 (APLP1) of Homo sapiens (Human).